The following is a 608-amino-acid chain: Chaperone protein DnaK (608 aa).

T175 is modified (phosphothreonine; by autocatalysis).

Belongs to the heat shock protein 70 family.

Acts as a chaperone. The polypeptide is Chaperone protein DnaK (Finegoldia magna (strain ATCC 29328 / DSM 20472 / WAL 2508) (Peptostreptococcus magnus)).